The following is a 120-amino-acid chain: Cell division protein FtsL (120 aa).

At 1–36 (MSNLAVKYKQQAQEEVQIQTPPQQMVQPKAKAKITR) the chain is on the cytoplasmic side. Residues 37-57 (IEKLLYVAFIGFLLYACVAFI) form a helical membrane-spanning segment. Over 58–120 (GNKAGLYQVN…INANNVKGLK (63 aa)) the chain is Extracellular.

The protein belongs to the FtsL family.

Its subcellular location is the cell membrane. Its function is as follows. Essential cell division protein. The sequence is that of Cell division protein FtsL from Bacillus anthracis.